Reading from the N-terminus, the 207-residue chain is Large ribosomal subunit protein bL25 (207 aa).

Belongs to the bacterial ribosomal protein bL25 family. CTC subfamily. As to quaternary structure, part of the 50S ribosomal subunit; part of the 5S rRNA/L5/L18/L25 subcomplex. Contacts the 5S rRNA. Binds to the 5S rRNA independently of L5 and L18.

Its function is as follows. This is one of the proteins that binds to the 5S RNA in the ribosome where it forms part of the central protuberance. The protein is Large ribosomal subunit protein bL25 of Dictyoglomus turgidum (strain DSM 6724 / Z-1310).